A 285-amino-acid polypeptide reads, in one-letter code: Probable endonuclease 4 (285 aa).

Positions 69, 109, 145, 179, 182, 216, 229, 231, and 261 each coordinate Zn(2+).

This sequence belongs to the AP endonuclease 2 family. The cofactor is Zn(2+).

It catalyses the reaction Endonucleolytic cleavage to 5'-phosphooligonucleotide end-products.. Its function is as follows. Endonuclease IV plays a role in DNA repair. It cleaves phosphodiester bonds at apurinic or apyrimidinic (AP) sites, generating a 3'-hydroxyl group and a 5'-terminal sugar phosphate. This Salmonella heidelberg (strain SL476) protein is Probable endonuclease 4.